Reading from the N-terminus, the 104-residue chain is Large ribosomal subunit protein uL24 (104 aa).

The protein belongs to the universal ribosomal protein uL24 family. In terms of assembly, part of the 50S ribosomal subunit.

One of two assembly initiator proteins, it binds directly to the 5'-end of the 23S rRNA, where it nucleates assembly of the 50S subunit. Functionally, one of the proteins that surrounds the polypeptide exit tunnel on the outside of the subunit. This Pseudomonas fluorescens (strain SBW25) protein is Large ribosomal subunit protein uL24.